Here is a 294-residue protein sequence, read N- to C-terminus: Survival motor neuron protein (294 aa).

Residues 1-10 show a composition bias toward gly residues; sequence MAMSSGGSGS. The disordered stretch occupies residues 1–32; that stretch reads MAMSSGGSGSGVPEQEDAVLFRRGTGQSDDSD. An N-acetylalanine modification is found at A2. S4, S5, and S8 each carry phosphoserine; by PKA. Residues 13 to 44 form a P1 (binding site for GEMIN2) region; it reads PEQEDAVLFRRGTGQSDDSDIWDDTALIKAYD. A Phosphothreonine modification is found at T25. Phosphoserine occurs at positions 28 and 31. K51 participates in a covalent cross-link: Glycyl lysine isopeptide (Lys-Gly) (interchain with G-Cter in SUMO2). The tract at residues 60–88 is disordered; that stretch reads CETSGKSKTTPKRKPAKKNKSQKKNTAAS. Residues 68 to 82 are compositionally biased toward basic residues; the sequence is TTPKRKPAKKNKSQK. The residue at position 69 (T69) is a Phosphothreonine. A Phosphothreonine; by PKA modification is found at T85. One can recognise a Tudor domain in the interval 91–151; the sequence is QWKVGDKCSA…LSPICEVANN (61 aa). The segment at 97–209 is required for interaction with RPP20/POP7; the sequence is KCSAIWSEDG…MPGPRLGPGK (113 aa). Residues 156-166 show a composition bias toward low complexity; it reads AQENENESQVS. The segment at 156–222 is disordered; sequence AQENENESQV…KFNGPPPPPP (67 aa). S187 bears the Phosphoserine; by PKA mark. The segment covering 194-204 has biased composition (pro residues); sequence LPPPPPMPGPR. Positions 206 to 215 are enriched in low complexity; sequence GPGKPGLKFN. K209 is covalently cross-linked (Glycyl lysine isopeptide (Lys-Gly) (interchain with G-Cter in SUMO2)). Residues 240 to 267 are P2 (binding site for SM B); that stretch reads PPIIPPPPPICPDSLDDADALGSMLISW. The tract at residues 279–294 is required for interaction with SYNCRIP; the sequence is GFRQNQKEGRCSHSLN.

It belongs to the SMN family. Homooligomer; may form higher order homooligomers in the dimer to octamer range. Part of the core SMN complex that contains SMN1, GEMIN2/SIP1, DDX20/GEMIN3, GEMIN4, GEMIN5, GEMIN6, GEMIN7, GEMIN8 and STRAP/UNRIP. Part of the SMN-Sm complex that contains SMN1, GEMIN2/SIP1, DDX20/GEMIN3, GEMIN4, GEMIN5, GEMIN6, GEMIN7, GEMIN8, STRAP/UNRIP and the Sm proteins SNRPB, SNRPD1, SNRPD2, SNRPD3, SNRPE, SNRPF and SNRPG. Component of an import snRNP complex composed of KPNB1, RNUT1, SMN1 and ZNF259. Interacts with DDX20, FBL, NOLA1, RNUT1, SYNCRIP and with several spliceosomal snRNP core Sm proteins, including SNRPB, SNRPD1, SNRPD2, SNRPD3, SNRPE and ILF3. Interacts with GEMIN2; the interaction is direct. Interacts with GEMIN3; the interaction is direct. Interacts with GEMIN8; the interaction is direct. Interacts with SNRPB; the interaction is direct. Interacts (via Tudor domain) with SNRPD1 (via C-terminus); the interaction is direct. Interacts with SNRPD2; the interaction is direct. Interacts (via Tudor domain) with SNRPD3 (via C-terminus); the interaction is direct. Interacts with SNRPE; the interaction is direct. Interacts with OSTF1, LSM10, LSM11 and RPP20/POP7. Interacts (via C-terminal region) with ZPR1 (via C-terminal region). Interacts (via Tudor domain) with COIL. Interacts with SETX; recruits SETX to POLR2A. Interacts with POLR2A (via the C-terminal domain (CTD)). Interacts with PRMT5. Interacts with XRN2. Interacts (via C-terminus) with FMR1 (via C-terminus); the interaction is direct and occurs in a RNA-independent manner. Interacts (via Tudor domain) with SF3B2 ('Arg-508'-methylated form). Interacts with WRAP53/TCAB1. Interacts (via Tudor domain) with ELAVL4 in an RNA-independent manner; the interaction is required for localization of ELAVL4 to RNA granules. Interacts with FRG1.

The protein resides in the nucleus. The protein localises to the gem. Its subcellular location is the cajal body. It is found in the cytoplasm. It localises to the cytoplasmic granule. The protein resides in the perikaryon. The protein localises to the cell projection. Its subcellular location is the neuron projection. It is found in the axon. It localises to the myofibril. The protein resides in the sarcomere. The protein localises to the z line. In terms of biological role, the SMN complex catalyzes the assembly of small nuclear ribonucleoproteins (snRNPs), the building blocks of the spliceosome, and thereby plays an important role in the splicing of cellular pre-mRNAs. Most spliceosomal snRNPs contain a common set of Sm proteins SNRPB, SNRPD1, SNRPD2, SNRPD3, SNRPE, SNRPF and SNRPG that assemble in a heptameric protein ring on the Sm site of the small nuclear RNA to form the core snRNP (Sm core). In the cytosol, the Sm proteins SNRPD1, SNRPD2, SNRPE, SNRPF and SNRPG are trapped in an inactive 6S pICln-Sm complex by the chaperone CLNS1A that controls the assembly of the core snRNP. To assemble core snRNPs, the SMN complex accepts the trapped 5Sm proteins from CLNS1A forming an intermediate. Binding of snRNA inside 5Sm ultimately triggers eviction of the SMN complex, thereby allowing binding of SNRPD3 and SNRPB to complete assembly of the core snRNP. Within the SMN complex, SMN1 acts as a structural backbone and together with GEMIN2 it gathers the Sm complex subunits. Ensures the correct splicing of U12 intron-containing genes that may be important for normal motor and proprioceptive neurons development. Also required for resolving RNA-DNA hybrids created by RNA polymerase II, that form R-loop in transcription terminal regions, an important step in proper transcription termination. May also play a role in the metabolism of small nucleolar ribonucleoprotein (snoRNPs). The chain is Survival motor neuron protein (SMN1) from Pongo abelii (Sumatran orangutan).